The primary structure comprises 183 residues: ATP-dependent protease subunit HslV (183 aa).

T13 is an active-site residue. Residues G168, C171, and T174 each coordinate Na(+).

Belongs to the peptidase T1B family. HslV subfamily. As to quaternary structure, a double ring-shaped homohexamer of HslV is capped on each side by a ring-shaped HslU homohexamer. The assembly of the HslU/HslV complex is dependent on binding of ATP.

The protein resides in the cytoplasm. The enzyme catalyses ATP-dependent cleavage of peptide bonds with broad specificity.. Its activity is regulated as follows. Allosterically activated by HslU binding. Protease subunit of a proteasome-like degradation complex believed to be a general protein degrading machinery. The sequence is that of ATP-dependent protease subunit HslV from Xanthomonas axonopodis pv. citri (strain 306).